A 699-amino-acid chain; its full sequence is MSKINKLEHIRNIGICAHIDAGKTTTTERILYYTGKSHKIGEVHEGGATMDWMEQEQERGITITSAATTCRWQDKIINIIDTPGHVDFTIEVERSLRVLDGAVAVFDGVAGVEPQSETVWRQADKYNVPRMCFVNKMDRMGADFYRCVEMIKDRLGAKPLVIQLPVGIEESFKGIIDLVKMKAVIWKDESLGAEYFEEDIPADMKDKAEEYRAKLLDMVVELDDAIMEKYLSGEEVTEEEIKRLIRRGTISAAFYPVLCGSAFKNKGVQPLLDAVVDFLPSPIDIGIVKGMEVSTGEEKDFPISITEPFSALAFKIMNDPFVGSLTFIRIYSGKITSGSTVINTVKNKREKIGRMLLMHANNREDVKEASAGDIVALAGLKDTTTGDTLSDMDKQVILERMEFPEPVIELAVEPKSTADQEKMGLALSRLAAEDPSFRVSTDHETGQTVIKGMGELHLEIIIDRMRREFKVEANIGAPQVAYRETITKACEIDYTHKKQSGGAGQFARVKIIFEPLKEVKDLKDEDKNKTFVFESKIVGGAVPKEYIPGVEKGLNNIRETGVIAGYPMIDFKATLVDGAFHDVDSSVLAFEIAAKAAFREGMPKGNPKLLEPIMKVEVITPDEYMGDIIGDLNSRRGQIQSMDPRGNAQVVTANVPLAEMFGYVNTLRSLSQGRAQFSMIFSHYDQVPSQVADIIKAKK.

The tr-type G domain maps to 8–283; that stretch reads EHIRNIGICA…AVVDFLPSPI (276 aa). GTP-binding positions include 17–24, 81–85, and 135–138; these read AHIDAGKT, DTPGH, and NKMD.

Belongs to the TRAFAC class translation factor GTPase superfamily. Classic translation factor GTPase family. EF-G/EF-2 subfamily.

Its subcellular location is the cytoplasm. In terms of biological role, catalyzes the GTP-dependent ribosomal translocation step during translation elongation. During this step, the ribosome changes from the pre-translocational (PRE) to the post-translocational (POST) state as the newly formed A-site-bound peptidyl-tRNA and P-site-bound deacylated tRNA move to the P and E sites, respectively. Catalyzes the coordinated movement of the two tRNA molecules, the mRNA and conformational changes in the ribosome. In Rickettsia felis (strain ATCC VR-1525 / URRWXCal2) (Rickettsia azadi), this protein is Elongation factor G.